The following is a 908-amino-acid chain: MPSSGPGDTSSSSLEREDDRKEGEEQEENRGKEERQEPSATARKVGRPGRKRKHPPVESSDTPKDPAVTTKSQPMAQDSGPSDLLPNGDLEKRSEPQPEEGSPAAGQKGGAPAEGEGTETPPEASRAVENGCCVTKEGRGASAGEGKEQKQTNIESMKMEGSRGRLRGGLGWESSLRQRPMPRLTFQAGDPYYISKRKRDEWLARWKREAEKKAKVIAVMNAVEENQASGESQKVEEASPPAVQQPTDPASPTVATTPEPVGGDAGDKNATKAADDEPEYEDGRGFGIGELVWGKLRGFSWWPGRIVSWWMTGRSRAAEGTRWVMWFGDGKFSVVCVEKLMPLSSFCSAFHQATYNKQPMYRKAIYEVLQVASSRAGKLFPACHDSDESDSGKAVEVQNKQMIEWALGGFQPSGPKGLEPPEEEKNPYKEVYTDMWVEPEAAAYAPPPPAKKPRKSTTEKPKVKEIIDERTRERLVYEVRQKCRNIEDICISCGSLNVTLEHPLFIGGMCQNCKNCFLECAYQYDDDGYQSYCTICCGGREVLMCGNNNCCRCFCVECVDLLVGPGAAQAAIKEDPWNCYMCGHKGTYGLLRRREDWPSRLQMFFANNHDQEFDPPKVYPPVPAEKRKPIRVLSLFDGIATGLLVLKDLGIQVDRYIASEVCEDSITVGMVRHQGKIMYVGDVRSVTQKHIQEWGPFDLVIGGSPCNDLSIVNPARKGLYEGTGRLFFEFYRLLHDARPKEGDDRPFFWLFENVVAMGVSDKRDISRFLESNPVMIDAKEVSAAHRARYFWGNLPGMNRPLASTVNDKLELQECLEHGRIAKFSKVRTITTRSNSIKQGKDQHFPVFMNEKEDILWCTEMERVFGFPVHYTDVSNMSRLARQRLLGRSWSVPVIRHLFAPLKEYFACV.

Residues 1-13 (MPSSGPGDTSSSS) are compositionally biased toward low complexity. Disordered stretches follow at residues 1-183 (MPSS…PMPR) and 226-281 (NQAS…PEYE). A compositionally biased stretch (basic and acidic residues) spans 14–37 (LEREDDRKEGEEQEENRGKEERQE). The segment covering 44–54 (KVGRPGRKRKH) has biased composition (basic residues). Over residues 69-80 (TTKSQPMAQDSG) the composition is skewed to polar residues. Serine 102 bears the Phosphoserine mark. Residues 110–124 (GAPAEGEGTETPPEA) are compositionally biased toward low complexity. Phosphothreonine is present on threonine 120. Lysine 158 is covalently cross-linked (Glycyl lysine isopeptide (Lys-Gly) (interchain with G-Cter in SUMO2)). Arginine 167 is subject to Omega-N-methylarginine. Residues 195–399 (SKRKRDEWLA…DSGKAVEVQN (205 aa)) form an interaction with DNMT1 and DNMT3B region. Phosphoserine occurs at positions 239 and 251. Residues 242 to 256 (AVQQPTDPASPTVAT) are compositionally biased toward polar residues. At threonine 257 the chain carries Phosphothreonine. Positions 265–275 (AGDKNATKAAD) are enriched in basic and acidic residues. Residues 288 to 346 (IGELVWGKLRGFSWWPGRIVSWWMTGRSRAAEGTRWVMWFGDGKFSVVCVEKLMPLSSF) form the PWWP domain. A phosphoserine mark is found at serine 386 and serine 389. The tract at residues 443–462 (AYAPPPPAKKPRKSTTEKPK) is disordered. Positions 478 to 610 (EVRQKCRNIE…LQMFFANNHD (133 aa)) constitute an ADD domain. A GATA-type; atypical zinc finger spans residues 489–519 (ICISCGSLNVTLEHPLFIGGMCQNCKNCFLE). The tract at residues 490–582 (CISCGSLNVT…KEDPWNCYMC (93 aa)) is interaction with the PRC2/EED-EZH2 complex. Residues 530 to 586 (QSYCTICCGGREVLMCGNNNCCRCFCVECVDLLVGPGAAQAAIKEDPWNCYMCGHKG) form a PHD-type; atypical zinc finger. Positions 630-908 (IRVLSLFDGI…APLKEYFACV (279 aa)) constitute an SAM-dependent MTase C5-type domain. Residues 637–641 (DGIAT), glutamate 660, and 682–684 (DVR) each bind S-adenosyl-L-methionine. The active site involves cysteine 706. The residue at position 706 (cysteine 706) is an S-methylcysteine; by autocatalysis. 887–889 (RSW) is a binding site for S-adenosyl-L-methionine.

The protein belongs to the class I-like SAM-binding methyltransferase superfamily. C5-methyltransferase family. Heterotetramer composed of 1 DNMT3A homodimer and 2 DNMT3L subunits (DNMT3L-DNMT3A-DNMT3A-DNMT3L). Interacts with DNMT1 and DNMT3B. Interacts with MPHOSPH8. Interacts with histone H3 that is not methylated at 'Lys-4' (H3K4). Binds the ZBTB18 transcriptional repressor. Interacts with SETDB1. Associates with HDAC1 through its ADD domain. Interacts with UHRF1. Interacts with the PRC2/EED-EZH2 complex. Interacts with UBC9, PIAS1 and PIAS2. Interacts with SPOCD1. Interacts with ZNF263; recruited to the SIX3 promoter along with other proteins involved in chromatin modification and transcriptional corepression where it contributes to transcriptional repression. Post-translationally, auto-methylated at Cys-706: auto-methylation takes place in absence of DNA substrate and inactivates the DNA methyltransferase activity. Inactivation by auto-methylation may be used to inactivate unused DNA methyltransferases in the cell. Sumoylated; sumoylation disrupts the ability to interact with histone deacetylases (HDAC1 and HDAC2) and repress transcription. In terms of tissue distribution, isoform 1 is expressed ubiquitously at low levels. Expression of isoform 2 is restricted to tissues containing cells which are undergoing active de novo methylation, including spleen, testis and thymus.

Its subcellular location is the nucleus. The protein resides in the chromosome. It is found in the cytoplasm. The catalysed reaction is a 2'-deoxycytidine in DNA + S-adenosyl-L-methionine = a 5-methyl-2'-deoxycytidine in DNA + S-adenosyl-L-homocysteine + H(+). It catalyses the reaction L-cysteinyl-[protein] + S-adenosyl-L-methionine = S-methyl-L-cysteinyl-[protein] + S-adenosyl-L-homocysteine + H(+). Its activity is regulated as follows. Activated by binding to the regulatory factor DNMT3L. Auto-methylation at Cys-706 in absence of DNA inactivates the DNA methyltransferase activity. Required for genome-wide de novo methylation and is essential for the establishment of DNA methylation patterns during development. DNA methylation is coordinated with methylation of histones. It modifies DNA in a non-processive manner and also methylates non-CpG sites. May preferentially methylate DNA linker between 2 nucleosomal cores and is inhibited by histone H1. Plays a role in paternal and maternal imprinting. Required for methylation of most imprinted loci in germ cells. Acts as a transcriptional corepressor for ZBTB18. Recruited to trimethylated 'Lys-36' of histone H3 (H3K36me3) sites. Can actively repress transcription through the recruitment of HDAC activity. Also has weak auto-methylation activity on Cys-706 in absence of DNA. The polypeptide is DNA (cytosine-5)-methyltransferase 3A (Mus musculus (Mouse)).